A 341-amino-acid polypeptide reads, in one-letter code: Elongation factor G (341 aa).

The protein belongs to the GTP-binding elongation factor family. EF-G/EF-2 subfamily.

The protein localises to the cytoplasm. Catalyzes the GTP-dependent ribosomal translocation step during translation elongation. During this step, the ribosome changes from the pre-translocational (PRE) to the post-translocational (POST) state as the newly formed A-site-bound peptidyl-tRNA and P-site-bound deacylated tRNA move to the P and E sites, respectively. Catalyzes the coordinated movement of the two tRNA molecules, the mRNA and conformational changes in the ribosome. This is Elongation factor G (fus) from Streptomyces ramocissimus.